The sequence spans 389 residues: Acetoin utilization protein AcuC (389 aa).

This sequence belongs to the histone deacetylase family.

Its pathway is ketone degradation; acetoin degradation. In terms of biological role, role in growth on acetoin or butanediol. Involved in the breakdown of these compounds used as a carbon source. The sequence is that of Acetoin utilization protein AcuC (acuC) from Staphylococcus aureus (strain Mu50 / ATCC 700699).